The following is a 370-amino-acid chain: MTQIIIAGAVSFLVAIFTTPVLIRYFSDTGRGQEIREDGPKSHLRKRGTPTMGGLAILAGILVAYVVAGLYGLLTGHEAFTASGLLVLGLTLGLGAVGFADDFIKLFRHRNLGLNKTAKLISQLVLALLFGFLVLRFPNDAGLTPGSTKLSFIRDLKTFDLAVGGTVIGTIVFLIFMYILIAAWSNAVNLTDGLDGLAAGVTAIVMGSYSLMTFWQFRYSCATNFAAGCYQVRDPLDLAVLAAAGLGGCLGFLWWNAAPAKIFMGDTGSLALGGLVAGISVTSRTELLMIIIGALFVIETVSVVIQIVVFHSTGKRFFRMAPIHHHFENGGWAETAVVVRFWLLAAMAAMAGVAIFYGDWLTASGIGVGA.

A run of 10 helical transmembrane segments spans residues 3–23 (QIIIAGAVSFLVAIFTTPVLI), 54–74 (GLAILAGILVAYVVAGLYGLL), 79–99 (AFTASGLLVLGLTLGLGAVGF), 118–138 (AKLISQLVLALLFGFLVLRFP), 161–181 (LAVGGTVIGTIVFLIFMYILI), 197–217 (LAAGVTAIVMGSYSLMTFWQF), 238–258 (LAVLAAAGLGGCLGFLWWNAA), 262–282 (IFMGDTGSLALGGLVAGISVT), 290–310 (IIIGALFVIETVSVVIQIVVF), and 341–361 (FWLLAAMAAMAGVAIFYGDWL).

The protein belongs to the glycosyltransferase 4 family. MraY subfamily. It depends on Mg(2+) as a cofactor.

It is found in the cell membrane. It catalyses the reaction UDP-N-acetyl-alpha-D-muramoyl-L-alanyl-gamma-D-glutamyl-meso-2,6-diaminopimeloyl-D-alanyl-D-alanine + di-trans,octa-cis-undecaprenyl phosphate = di-trans,octa-cis-undecaprenyl diphospho-N-acetyl-alpha-D-muramoyl-L-alanyl-D-glutamyl-meso-2,6-diaminopimeloyl-D-alanyl-D-alanine + UMP. Its pathway is cell wall biogenesis; peptidoglycan biosynthesis. In terms of biological role, catalyzes the initial step of the lipid cycle reactions in the biosynthesis of the cell wall peptidoglycan: transfers peptidoglycan precursor phospho-MurNAc-pentapeptide from UDP-MurNAc-pentapeptide onto the lipid carrier undecaprenyl phosphate, yielding undecaprenyl-pyrophosphoryl-MurNAc-pentapeptide, known as lipid I. The sequence is that of Phospho-N-acetylmuramoyl-pentapeptide-transferase from Corynebacterium aurimucosum (strain ATCC 700975 / DSM 44827 / CIP 107346 / CN-1) (Corynebacterium nigricans).